The following is a 146-amino-acid chain: Small ribosomal subunit protein bS6 (146 aa).

The tract at residues 106-146 is disordered; that stretch reads QAAATQRAAERRAQREAERNAAQAQSSASNQARTAATTSGK. Over residues 113-124 the composition is skewed to basic and acidic residues; sequence AAERRAQREAER. Residues 125-146 show a composition bias toward low complexity; that stretch reads NAAQAQSSASNQARTAATTSGK.

It belongs to the bacterial ribosomal protein bS6 family.

Its function is as follows. Binds together with bS18 to 16S ribosomal RNA. In Oenococcus oeni (strain ATCC BAA-331 / PSU-1), this protein is Small ribosomal subunit protein bS6.